A 1490-amino-acid polypeptide reads, in one-letter code: WD repeat-containing protein 7 (1490 aa).

7 WD repeats span residues 17–56 (APTH…QINP), 62–104 (GHTA…CIEF), 156–199 (ISPD…SDMQ), 324–366 (LICP…DKQG), 404–443 (NEPL…IVQL), 462–507 (GHRN…MKHI), and 558–597 (RHLF…LDRC). 2 disordered regions span residues 761-783 (DEEE…YRSS) and 911-945 (GDHM…IVQG). Over residues 768 to 782 (IMRQRREESDPEYRS) the composition is skewed to basic and acidic residues. At Ser-935 the chain carries Phosphoserine. Over residues 936–945 (PPTSSNIVQG) the composition is skewed to polar residues. WD repeat units follow at residues 1351–1390 (PAIC…CQTI) and 1392–1432 (GHKG…LGSI). A Phosphoserine modification is found at Ser-1456.

The protein is WD repeat-containing protein 7 (WDR7) of Homo sapiens (Human).